The following is a 61-amino-acid chain: uncharacterized protein (61 aa).

2 consecutive transmembrane segments (helical) span residues 5–25 (MLYF…SLLL) and 29–49 (YILT…PWYT).

The protein localises to the membrane. This is an uncharacterized protein from Saccharomyces cerevisiae (strain ATCC 204508 / S288c) (Baker's yeast).